A 642-amino-acid chain; its full sequence is tRNA uridine 5-carboxymethylaminomethyl modification enzyme MnmG (642 aa).

Residues 10 to 15 (GAGHAG), valine 122, and serine 177 contribute to the FAD site. Position 269-283 (269-283 (SARYCPSLEDKVMRF)) interacts with NAD(+). Glutamine 366 is an FAD binding site.

The protein belongs to the MnmG family. Homodimer. Heterotetramer of two MnmE and two MnmG subunits. It depends on FAD as a cofactor.

The protein resides in the cytoplasm. In terms of biological role, NAD-binding protein involved in the addition of a carboxymethylaminomethyl (cmnm) group at the wobble position (U34) of certain tRNAs, forming tRNA-cmnm(5)s(2)U34. This chain is tRNA uridine 5-carboxymethylaminomethyl modification enzyme MnmG, found in Syntrophobacter fumaroxidans (strain DSM 10017 / MPOB).